The chain runs to 25 residues: ATP-dependent 6-phosphofructokinase 2 (25 aa).

Gly11 is an ATP binding site.

This sequence belongs to the phosphofructokinase type A (PFKA) family. ATP-dependent PFK group I subfamily. Prokaryotic clade 'B1' sub-subfamily. In terms of assembly, homotetramer. Mg(2+) serves as cofactor.

It is found in the cytoplasm. The enzyme catalyses beta-D-fructose 6-phosphate + ATP = beta-D-fructose 1,6-bisphosphate + ADP + H(+). The protein operates within carbohydrate degradation; glycolysis; D-glyceraldehyde 3-phosphate and glycerone phosphate from D-glucose: step 3/4. In contrast with PFK1 this enzyme is not affected by phosphoenolpyruvate. Catalyzes the phosphorylation of D-fructose 6-phosphate to fructose 1,6-bisphosphate by ATP, the first committing step of glycolysis. The chain is ATP-dependent 6-phosphofructokinase 2 (pfkA2) from Thermus thermophilus (strain ATCC 27634 / DSM 579 / HB8).